The sequence spans 554 residues: Phosphomethylpyrimidine synthase (554 aa).

Residues Asn-188, Met-217, Tyr-246, His-282, 302-304 (SRG), 343-346 (DGLR), and Glu-382 each bind substrate. His-386 serves as a coordination point for Zn(2+). Tyr-409 lines the substrate pocket. Zn(2+) is bound at residue His-450. Residues Cys-530, Cys-533, and Cys-538 each coordinate [4Fe-4S] cluster.

It belongs to the ThiC family. In terms of assembly, homodimer. It depends on [4Fe-4S] cluster as a cofactor.

It catalyses the reaction 5-amino-1-(5-phospho-beta-D-ribosyl)imidazole + S-adenosyl-L-methionine = 4-amino-2-methyl-5-(phosphooxymethyl)pyrimidine + CO + 5'-deoxyadenosine + formate + L-methionine + 3 H(+). Its pathway is cofactor biosynthesis; thiamine diphosphate biosynthesis. Its function is as follows. Catalyzes the synthesis of the hydroxymethylpyrimidine phosphate (HMP-P) moiety of thiamine from aminoimidazole ribotide (AIR) in a radical S-adenosyl-L-methionine (SAM)-dependent reaction. The sequence is that of Phosphomethylpyrimidine synthase from Coxiella burnetii (strain RSA 493 / Nine Mile phase I).